Consider the following 244-residue polypeptide: NAD(P)H-quinone oxidoreductase subunit K (244 aa).

C51, C52, C116, and C147 together coordinate [4Fe-4S] cluster.

The protein belongs to the complex I 20 kDa subunit family. As to quaternary structure, NDH-1 can be composed of about 15 different subunits; different subcomplexes with different compositions have been identified which probably have different functions. Requires [4Fe-4S] cluster as cofactor.

The protein resides in the cellular thylakoid membrane. The catalysed reaction is a plastoquinone + NADH + (n+1) H(+)(in) = a plastoquinol + NAD(+) + n H(+)(out). It catalyses the reaction a plastoquinone + NADPH + (n+1) H(+)(in) = a plastoquinol + NADP(+) + n H(+)(out). Functionally, NDH-1 shuttles electrons from an unknown electron donor, via FMN and iron-sulfur (Fe-S) centers, to quinones in the respiratory and/or the photosynthetic chain. The immediate electron acceptor for the enzyme in this species is believed to be plastoquinone. Couples the redox reaction to proton translocation, and thus conserves the redox energy in a proton gradient. Cyanobacterial NDH-1 also plays a role in inorganic carbon-concentration. In Synechococcus sp. (strain JA-2-3B'a(2-13)) (Cyanobacteria bacterium Yellowstone B-Prime), this protein is NAD(P)H-quinone oxidoreductase subunit K.